Consider the following 146-residue polypeptide: ATP synthase epsilon chain (146 aa).

The protein belongs to the ATPase epsilon chain family. In terms of assembly, F-type ATPases have 2 components, CF(1) - the catalytic core - and CF(0) - the membrane proton channel. CF(1) has five subunits: alpha(3), beta(3), gamma(1), delta(1), epsilon(1). CF(0) has three main subunits: a, b and c.

It localises to the cell membrane. Its function is as follows. Produces ATP from ADP in the presence of a proton gradient across the membrane. This is ATP synthase epsilon chain from Lactobacillus delbrueckii subsp. bulgaricus (strain ATCC 11842 / DSM 20081 / BCRC 10696 / JCM 1002 / NBRC 13953 / NCIMB 11778 / NCTC 12712 / WDCM 00102 / Lb 14).